Reading from the N-terminus, the 224-residue chain is Protein-L-isoaspartate O-methyltransferase (224 aa).

Residue S63 is part of the active site.

The protein belongs to the methyltransferase superfamily. L-isoaspartyl/D-aspartyl protein methyltransferase family.

The protein localises to the cytoplasm. It carries out the reaction [protein]-L-isoaspartate + S-adenosyl-L-methionine = [protein]-L-isoaspartate alpha-methyl ester + S-adenosyl-L-homocysteine. Catalyzes the methyl esterification of L-isoaspartyl residues in peptides and proteins that result from spontaneous decomposition of normal L-aspartyl and L-asparaginyl residues. It plays a role in the repair and/or degradation of damaged proteins. The protein is Protein-L-isoaspartate O-methyltransferase of Herpetosiphon aurantiacus (strain ATCC 23779 / DSM 785 / 114-95).